Reading from the N-terminus, the 154-residue chain is Myoglobin (154 aa).

The region spanning 2–148 is the Globin domain; the sequence is GLSDGEWQLV…FRNDMAAKYK (147 aa). Position 4 is a phosphoserine (Ser-4). His-65 contributes to the nitrite binding site. His-65 serves as a coordination point for O2. Residue Thr-68 is modified to Phosphothreonine. His-94 serves as a coordination point for heme b.

Belongs to the globin family. In terms of assembly, monomeric.

It localises to the cytoplasm. The protein localises to the sarcoplasm. The enzyme catalyses Fe(III)-heme b-[protein] + nitric oxide + H2O = Fe(II)-heme b-[protein] + nitrite + 2 H(+). It catalyses the reaction H2O2 + AH2 = A + 2 H2O. Its function is as follows. Monomeric heme protein which primary function is to store oxygen and facilitate its diffusion within muscle tissues. Reversibly binds oxygen through a pentacoordinated heme iron and enables its timely and efficient release as needed during periods of heightened demand. Depending on the oxidative conditions of tissues and cells, and in addition to its ability to bind oxygen, it also has a nitrite reductase activity whereby it regulates the production of bioactive nitric oxide. Under stress conditions, like hypoxia and anoxia, it also protects cells against reactive oxygen species thanks to its pseudoperoxidase activity. This Saimiri sciureus (Common squirrel monkey) protein is Myoglobin (MB).